A 346-amino-acid polypeptide reads, in one-letter code: Syntaxin UFE1 (346 aa).

Topologically, residues 1 to 324 (MMSDLTPIFR…RKAKRAAGRT (324 aa)) are cytoplasmic. The t-SNARE coiled-coil homology domain occupies 255 to 317 (LNQKNEQLKK…KKGNKELRKA (63 aa)). Residues 325–342 (AKMTTYGAIIMGVFILFL) traverse the membrane as a helical; Anchor for type IV membrane protein segment. Residues 343–346 (DYVG) lie on the Lumenal side of the membrane.

This sequence belongs to the syntaxin family. In terms of assembly, component of a SNARE complex consisting of UFE1, USE1, SEC20 and SEC22 or YKT6.

Its subcellular location is the endoplasmic reticulum membrane. Syntaxin required for targeting and fusion of Golgi-derived retrograde transport vesicles with the ER. In Saccharomyces cerevisiae (strain ATCC 204508 / S288c) (Baker's yeast), this protein is Syntaxin UFE1 (UFE1).